We begin with the raw amino-acid sequence, 260 residues long: Exosome complex component Rrp42 (260 aa).

It belongs to the RNase PH family. Rrp42 subfamily. As to quaternary structure, component of the archaeal exosome complex. Forms a hexameric ring-like arrangement composed of 3 Rrp41-Rrp42 heterodimers. The hexameric ring associates with a trimer of Rrp4 and/or Csl4 subunits.

Its subcellular location is the cytoplasm. Its function is as follows. Non-catalytic component of the exosome, which is a complex involved in RNA degradation. Contributes to the structuring of the Rrp41 active site. The protein is Exosome complex component Rrp42 of Thermoplasma acidophilum (strain ATCC 25905 / DSM 1728 / JCM 9062 / NBRC 15155 / AMRC-C165).